We begin with the raw amino-acid sequence, 149 residues long: Ribonuclease pancreatic (149 aa).

The signal sequence occupies residues 1–25 (MGLEKSLMLFPLFVLLLGWVQPSLG). The segment at 30–49 (AQKFQRQHMDPAGSSSNSPT) is disordered. Substrate contacts are provided by Lys32 and Arg35. Residue His37 is the Proton acceptor of the active site. 4 disulfides stabilise this stretch: Cys51-Cys109, Cys65-Cys120, Cys83-Cys135, and Cys90-Cys97. 66–70 (KPVNT) contributes to the substrate binding site. Asn87 is a glycosylation site (N-linked (GlcNAc...) asparagine). Lys91 serves as a coordination point for substrate. Catalysis depends on His144, which acts as the Proton donor.

Belongs to the pancreatic ribonuclease family. As to quaternary structure, monomer. Interacts with and forms tight 1:1 complexes with RNH1. Dimerization of two such complexes may occur. Interaction with RNH1 inhibits this protein. Pancreas.

The protein resides in the secreted. It carries out the reaction an [RNA] containing cytidine + H2O = an [RNA]-3'-cytidine-3'-phosphate + a 5'-hydroxy-ribonucleotide-3'-[RNA].. It catalyses the reaction an [RNA] containing uridine + H2O = an [RNA]-3'-uridine-3'-phosphate + a 5'-hydroxy-ribonucleotide-3'-[RNA].. In terms of biological role, endonuclease that catalyzes the cleavage of RNA on the 3' side of pyrimidine nucleotides. Acts on single-stranded and double-stranded RNA. This chain is Ribonuclease pancreatic (Rnase1), found in Mus saxicola (Brown spiny mouse).